We begin with the raw amino-acid sequence, 150 residues long: Large ribosomal subunit protein bL9 (150 aa).

The protein belongs to the bacterial ribosomal protein bL9 family.

Binds to the 23S rRNA. In Streptococcus pyogenes serotype M3 (strain SSI-1), this protein is Large ribosomal subunit protein bL9.